A 390-amino-acid chain; its full sequence is Cystathionine beta-lyase (390 aa).

At Lys-202 the chain carries N6-(pyridoxal phosphate)lysine.

Belongs to the trans-sulfuration enzymes family. The cofactor is pyridoxal 5'-phosphate.

It is found in the cytoplasm. Its subcellular location is the nucleus. It catalyses the reaction L,L-cystathionine + H2O = L-homocysteine + pyruvate + NH4(+). The catalysed reaction is an S-substituted L-cysteine + H2O = a thiol + pyruvate + NH4(+). It participates in amino-acid biosynthesis; L-methionine biosynthesis via de novo pathway; L-homocysteine from L-cystathionine: step 1/1. The chain is Cystathionine beta-lyase (str3) from Schizosaccharomyces pombe (strain 972 / ATCC 24843) (Fission yeast).